Consider the following 241-residue polypeptide: Serine protease 58 (241 aa).

A signal peptide spans 1-17; that stretch reads MKFILLWALLNLTVALA. Residues 18–239 form the Peptidase S1 domain; the sequence is FNPDYTVSST…YIPWIENVIQ (222 aa). A disulfide bridge links cysteine 41 with cysteine 57. Residues histidine 56 and aspartate 101 each act as charge relay system in the active site. 3 cysteine pairs are disulfide-bonded: cysteine 133–cysteine 201, cysteine 165–cysteine 180, and cysteine 191–cysteine 215. Asparagine 156 and asparagine 173 each carry an N-linked (GlcNAc...) asparagine glycan. The active-site Charge relay system is serine 195.

Belongs to the peptidase S1 family.

It localises to the secreted. The catalysed reaction is Preferential cleavage: Arg-|-Xaa, Lys-|-Xaa.. This is Serine protease 58 (PRSS58) from Homo sapiens (Human).